Reading from the N-terminus, the 419-residue chain is NF-kappa-B essential modulator (419 aa).

Positions 1-46 (MSRTPWKSQPCEMVQPSGGPAGDQDVLGEESSLGKPTMLHLPSEQG) are disordered. The required for interaction with and ubiquitination by MARCHF2 stretch occupies residues 1 to 197 (MSRTPWKSQP…REALQQQHSV (197 aa)). Residues serine 31, serine 43, serine 68, and serine 85 each carry the phosphoserine modification. The interval 44 to 111 (EQGAPETFQR…RLVERLSLEK (68 aa)) is interaction with CHUK/IKBKB. Positions 100–353 (ARRLVERLSL…KTSCQESARI (254 aa)) form a coiled coil. Residues lysine 111, lysine 139, lysine 143, lysine 226, lysine 246, and lysine 264 each participate in a glycyl lysine isopeptide (Lys-Gly) (interchain with G-Cter in ubiquitin) cross-link. The interval 150–257 (LGELQESQSR…SVVSSERNRG (108 aa)) is interaction with TANK. The segment at 242–350 (DNHIKSSVVS…SRLKTSCQES (109 aa)) is ubiquitin-binding (UBAN). Residues 246 to 365 (KSSVVSSERN…MRKRHVEVSQ (120 aa)) form a self-association region. Positions 251 to 419 (SSERNRGLQL…LQIHVMECIE (169 aa)) are required for interaction with TNFAIP3. Lysine 277 participates in a covalent cross-link: Glycyl lysine isopeptide (Lys-Gly) (interchain with G-Cter in SUMO); alternate. Lysine 277 is covalently cross-linked (Glycyl lysine isopeptide (Lys-Gly) (interchain with G-Cter in ubiquitin); alternate). Glycyl lysine isopeptide (Lys-Gly) (interchain with G-Cter in ubiquitin) cross-links involve residues lysine 283, lysine 285, lysine 292, and lysine 302. A Glycyl lysine isopeptide (Lys-Gly) (interchain with G-Cter in SUMO); alternate cross-link involves residue lysine 309. A Glycyl lysine isopeptide (Lys-Gly) (interchain with G-Cter in ubiquitin); alternate cross-link involves residue lysine 309. Residues 322–343 (LAERKELLQEQLEQLQREYSRL) form a leucine-zipper region. Lysine 326 is covalently cross-linked (Glycyl lysine isopeptide (Lys-Gly) (interchain with G-Cter in ubiquitin)). A disordered region spans residues 363–394 (VSQPTLPPAPAHHSFHPALPSQRRSPPEEPPN). Serine 376 and serine 387 each carry phosphoserine. The interval 382-419 (PSQRRSPPEEPPNFCCPKCQYQAPDMDTLQIHVMECIE) is interaction with CYLD. The CCHC NOA-type zinc finger occupies 389–419 (PEEPPNFCCPKCQYQAPDMDTLQIHVMECIE). Residue cysteine 397 coordinates Zn(2+). Lysine 399 is covalently cross-linked (Glycyl lysine isopeptide (Lys-Gly) (interchain with G-Cter in ubiquitin)). Zn(2+)-binding residues include cysteine 400, histidine 413, and cysteine 417.

As to quaternary structure, homodimer; disulfide-linked. Component of the I-kappa-B-kinase (IKK) core complex consisting of CHUK, IKBKB and IKBKG; probably four alpha/CHUK-beta/IKBKB dimers are associated with four gamma/IKBKG subunits. The IKK core complex seems to associate with regulatory or adapter proteins to form a IKK-signalosome holo-complex. The IKK complex associates with TERF2IP/RAP1, leading to promote IKK-mediated phosphorylation of RELA/p65. Part of a complex composed of NCOA2, NCOA3, CHUK/IKKA, IKBKB, IKBKG and CREBBP. Interacts with COPS3, CYLD, NALP2, TRPC4AP and PIDD1. Interacts with ATM; the complex is exported from the nucleus. Interacts with TRAF6. Interacts with IKBKE. Interacts with TANK; the interaction is enhanced by IKBKE and TBK1. Part of a ternary complex consisting of TANK, IKBKB and IKBKG. Interacts with ZFAND5. Interacts with RIPK2. Interacts with TNIP1 and TNFAIP3; TNIP1 facilitates the TNFAIP3-mediated de-ubiquitination of IKBKG. Interacts with TNFAIP3; the interaction is induced by TNF stimulation and by polyubiquitin. Binds (via UBAN region) polyubiquitin; binds both 'Lys-63'-linked and linear polyubiquitin, with higher affinity for linear ubiquitin. Interacts with NLRP10. Interacts with TANK; this interaction increases in response to DNA damage. Interacts with USP10; this interaction increases in response to DNA damage. Interacts with ZC3H12A; this interaction increases in response to DNA damage. Interacts with IFIT5; the interaction synergizes the recruitment of IKK to MAP3K7 and enhances IKK phosphorylation. Interacts with TRIM29; this interaction induces IKBKG/NEMO ubiquitination and proteolytic degradation. Interacts with TRIM13; this interaction leads to IKBKG/NEMO ubiquitination. Interacts with ARFIP2. Interacts with RIPK1. Interacts with (ubiquitinated) BCL10; interaction with polyubiquitinated BCL10 via both 'Lys-63'-linked and linear ubiquitin is required for TCR-induced NF-kappa-B activation. Interacts with MARCHF2; during the late stages of macrophage viral and bacterial infection; the interaction leads to ubiquitination and degradation of IKBKG/NEMO. In terms of processing, phosphorylation at Ser-68 attenuates aminoterminal homodimerization. Polyubiquitinated on Lys-285 via 'Lys-63'-linked ubiquitin; the ubiquitination is mediated downstream of NOD2 and RIPK2 and probably plays a role in signaling by facilitating interactions with ubiquitin domain-containing proteins and activates the NF-kappa-B pathway. Polyubiquitinated on Lys-285 and Lys-399 through 'Lys-63'-linked ubiquitin; the ubiquitination is mediated by BCL10, MALT1 and TRAF6 and probably plays a role in signaling by facilitating interactions with ubiquitin domain-containing proteins and activates the NF-kappa-B pathway. Monoubiquitinated on Lys-277 and Lys-309; promotes nuclear export. Polyubiquitinated through 'Lys-27' by TRIM23; involved in antiviral innate and inflammatory responses. Linear polyubiquitinated on Lys-111, Lys-143, Lys-226, Lys-246, Lys-264, Lys-277, Lys-285, Lys-292, Lys-302, Lys-309 and Lys-326; the head-to-tail polyubiquitination is mediated by the LUBAC complex and plays a key role in NF-kappa-B activation. Deubiquitinated by USP10 in a TANK-dependent and -independent manner, leading to the negative regulation of NF-kappa-B signaling upon DNA damage. Ubiquitinated at Lys-326 by MARCHF2 following bacterial and viral infection which leads to its degradation. Post-translationally, sumoylated on Lys-277 and Lys-309 with SUMO1; the modification results in phosphorylation of Ser-85 by ATM leading to a replacement of the sumoylation by mono-ubiquitination on these residues. In terms of processing, neddylated by TRIM40, resulting in stabilization of NFKBIA and down-regulation of NF-kappa-B activity. (Microbial infection) Cleaved by porcine reproductive and respiratory syndrome virus serine protease nsp4 after Glu-349. The cleavage inhibits NEMO proper function.

The protein resides in the cytoplasm. Its subcellular location is the nucleus. Its function is as follows. Regulatory subunit of the IKK core complex which phosphorylates inhibitors of NF-kappa-B thus leading to the dissociation of the inhibitor/NF-kappa-B complex and ultimately the degradation of the inhibitor. Its binding to scaffolding polyubiquitin plays a key role in IKK activation by multiple signaling receptor pathways. Can recognize and bind both 'Lys-63'-linked and linear polyubiquitin upon cell stimulation, with a much highr affinity for linear polyubiquitin. Could be implicated in NF-kappa-B-mediated protection from cytokine toxicity. Essential for viral activation of IRF3. Involved in TLR3- and IFIH1-mediated antiviral innate response; this function requires 'Lys-27'-linked polyubiquitination. The protein is NF-kappa-B essential modulator (IKBKG) of Sus scrofa (Pig).